The sequence spans 204 residues: Translation initiation factor IF-3 (204 aa).

The tract at residues 169 to 204 (VPKAAPKRDSGRSESAQEAPTARSAEASRPEAPANA) is disordered.

The protein belongs to the IF-3 family. Monomer.

It localises to the cytoplasm. Its function is as follows. IF-3 binds to the 30S ribosomal subunit and shifts the equilibrium between 70S ribosomes and their 50S and 30S subunits in favor of the free subunits, thus enhancing the availability of 30S subunits on which protein synthesis initiation begins. The protein is Translation initiation factor IF-3 of Deinococcus geothermalis (strain DSM 11300 / CIP 105573 / AG-3a).